The chain runs to 537 residues: CWF19-like protein 1 (537 aa).

Residues 297-323 (KQGRKRPSTGRDTRPPHAKQPRKPPQP) form a disordered region.

Belongs to the CWF19 family.

This is CWF19-like protein 1 (Cwf19l1) from Mus musculus (Mouse).